Reading from the N-terminus, the 358-residue chain is Fructose-bisphosphate aldolase 2, cytoplasmic (358 aa).

Position 39 (R39) interacts with substrate. The Proton acceptor role is filled by E183. The active-site Schiff-base intermediate with dihydroxyacetone-P is K225. Substrate is bound by residues 266-268 and R298; that span reads SGG.

Belongs to the class I fructose-bisphosphate aldolase family. In terms of assembly, homotetramer.

It localises to the cytoplasm. The protein localises to the cytosol. The enzyme catalyses beta-D-fructose 1,6-bisphosphate = D-glyceraldehyde 3-phosphate + dihydroxyacetone phosphate. It participates in carbohydrate degradation; glycolysis; D-glyceraldehyde 3-phosphate and glycerone phosphate from D-glucose: step 4/4. Functionally, fructose-bisphosphate aldolase that plays a key role in glycolysis and gluconeogenesis. The polypeptide is Fructose-bisphosphate aldolase 2, cytoplasmic (Oryza sativa subsp. japonica (Rice)).